We begin with the raw amino-acid sequence, 350 residues long: Biotin synthase (350 aa).

The region spanning 41–265 (NEVQISRLLS…VMPLSRVRLS (225 aa)) is the Radical SAM core domain. Cys56, Cys60, and Cys63 together coordinate [4Fe-4S] cluster. [2Fe-2S] cluster-binding residues include Cys100, Cys131, Cys191, and Arg263.

The protein belongs to the radical SAM superfamily. Biotin synthase family. Homodimer. [4Fe-4S] cluster is required as a cofactor. Requires [2Fe-2S] cluster as cofactor.

The enzyme catalyses (4R,5S)-dethiobiotin + (sulfur carrier)-SH + 2 reduced [2Fe-2S]-[ferredoxin] + 2 S-adenosyl-L-methionine = (sulfur carrier)-H + biotin + 2 5'-deoxyadenosine + 2 L-methionine + 2 oxidized [2Fe-2S]-[ferredoxin]. Its pathway is cofactor biosynthesis; biotin biosynthesis; biotin from 7,8-diaminononanoate: step 2/2. Its function is as follows. Catalyzes the conversion of dethiobiotin (DTB) to biotin by the insertion of a sulfur atom into dethiobiotin via a radical-based mechanism. The chain is Biotin synthase from Shewanella loihica (strain ATCC BAA-1088 / PV-4).